A 429-amino-acid polypeptide reads, in one-letter code: UDP-N-acetylglucosamine 1-carboxyvinyltransferase (429 aa).

Phosphoenolpyruvate is bound at residue 22–23; sequence KN. R93 is a UDP-N-acetyl-alpha-D-glucosamine binding site. C117 acts as the Proton donor in catalysis. A 2-(S-cysteinyl)pyruvic acid O-phosphothioketal modification is found at C117. UDP-N-acetyl-alpha-D-glucosamine-binding positions include 122 to 126, D313, and I335; that span reads RPVDQ.

The protein belongs to the EPSP synthase family. MurA subfamily.

It is found in the cytoplasm. It carries out the reaction phosphoenolpyruvate + UDP-N-acetyl-alpha-D-glucosamine = UDP-N-acetyl-3-O-(1-carboxyvinyl)-alpha-D-glucosamine + phosphate. Its pathway is cell wall biogenesis; peptidoglycan biosynthesis. In terms of biological role, cell wall formation. Adds enolpyruvyl to UDP-N-acetylglucosamine. The polypeptide is UDP-N-acetylglucosamine 1-carboxyvinyltransferase (Variovorax paradoxus (strain S110)).